The following is a 640-amino-acid chain: Chaperone protein DnaK (640 aa).

Phosphothreonine; by autocatalysis is present on T198. Positions K600–K640 are disordered. The span at A630–K640 shows a compositional bias: acidic residues.

Belongs to the heat shock protein 70 family.

Its function is as follows. Acts as a chaperone. In Citrifermentans bemidjiense (strain ATCC BAA-1014 / DSM 16622 / JCM 12645 / Bem) (Geobacter bemidjiensis), this protein is Chaperone protein DnaK.